The primary structure comprises 179 residues: Replication restart protein DnaT (179 aa).

The disordered stretch occupies residues 156–179; it reads GGLPKRDVNTVSEPDSQIPPGFRG.

It belongs to the DnaT family. In terms of assembly, homooligomerizes. Interacts with PriB. Component of the replication restart primosome. Primosome assembly occurs via a 'hand-off' mechanism. PriA binds to replication forks, subsequently PriB then DnaT bind; DnaT then displaces ssDNA to generate the helicase loading substrate.

Functionally, involved in the restart of stalled replication forks, which reloads the replicative helicase on sites other than the origin of replication. Can function in multiple replication restart pathways. Displaces ssDNA from a PriB-ssDNA complex. Probably forms a spiral filament on ssDNA. The protein is Replication restart protein DnaT of Escherichia coli (strain ATCC 8739 / DSM 1576 / NBRC 3972 / NCIMB 8545 / WDCM 00012 / Crooks).